We begin with the raw amino-acid sequence, 225 residues long: NAD(P)H-quinone oxidoreductase subunit K, chloroplastic (225 aa).

Residues cysteine 43, cysteine 44, cysteine 108, and cysteine 139 each contribute to the [4Fe-4S] cluster site.

The protein belongs to the complex I 20 kDa subunit family. NDH is composed of at least 16 different subunits, 5 of which are encoded in the nucleus. It depends on [4Fe-4S] cluster as a cofactor.

It localises to the plastid. The protein resides in the chloroplast thylakoid membrane. The catalysed reaction is a plastoquinone + NADH + (n+1) H(+)(in) = a plastoquinol + NAD(+) + n H(+)(out). It catalyses the reaction a plastoquinone + NADPH + (n+1) H(+)(in) = a plastoquinol + NADP(+) + n H(+)(out). NDH shuttles electrons from NAD(P)H:plastoquinone, via FMN and iron-sulfur (Fe-S) centers, to quinones in the photosynthetic chain and possibly in a chloroplast respiratory chain. The immediate electron acceptor for the enzyme in this species is believed to be plastoquinone. Couples the redox reaction to proton translocation, and thus conserves the redox energy in a proton gradient. The polypeptide is NAD(P)H-quinone oxidoreductase subunit K, chloroplastic (Arabidopsis thaliana (Mouse-ear cress)).